Here is a 399-residue protein sequence, read N- to C-terminus: Elongation factor Tu (399 aa).

The 200-residue stretch at 10 to 209 folds into the tr-type G domain; sequence KPHVNIGTIG…KVDEYIPTPV (200 aa). The tract at residues 19 to 26 is G1; it reads GHVDHGKT. 19-26 contacts GTP; it reads GHVDHGKT. Position 26 (T26) interacts with Mg(2+). The segment at 60-64 is G2; it reads GITIA. The interval 81–84 is G3; sequence DCPG. GTP is bound by residues 81–85 and 136–139; these read DCPGH and NKAD. A G4 region spans residues 136 to 139; it reads NKAD. Residues 174–176 form a G5 region; sequence SAL.

This sequence belongs to the TRAFAC class translation factor GTPase superfamily. Classic translation factor GTPase family. EF-Tu/EF-1A subfamily. As to quaternary structure, monomer.

The protein localises to the cytoplasm. The enzyme catalyses GTP + H2O = GDP + phosphate + H(+). Its function is as follows. GTP hydrolase that promotes the GTP-dependent binding of aminoacyl-tRNA to the A-site of ribosomes during protein biosynthesis. This is Elongation factor Tu from Campylobacter curvus (strain 525.92).